A 33-amino-acid chain; its full sequence is Protamine TP17 (33 aa).

The tract at residues 1–33 (MPRRRRSSSRPVRRRRRPRVSRRRRRRGRRRRR) is disordered.

In terms of tissue distribution, testis.

The protein resides in the nucleus. It is found in the chromosome. In terms of biological role, protamines substitute for histones in the chromatin of sperm during the haploid phase of spermatogenesis. They compact sperm DNA into a highly condensed, stable and inactive complex. The polypeptide is Protamine TP17 (Oncorhynchus mykiss (Rainbow trout)).